We begin with the raw amino-acid sequence, 476 residues long: Zinc metalloproteinase/disintegrin (476 aa).

Residues 1–20 (MIQVLLVIICLADFPYQGTS) form the signal peptide. Residues 21–184 (IILESGNVND…KSDEPIKASQ (164 aa)) constitute a propeptide that is removed on maturation. Q185 bears the Pyrrolidone carboxylic acid mark. The region spanning 191–387 (RYIELVVVAD…RNPQCILNEP (197 aa)) is the Peptidase M12B domain. Ca(2+)-binding residues include E194 and D278. 3 disulfides stabilise this stretch: C302–C382, C342–C366, and C344–C349. H327 is a Zn(2+) binding site. E328 is an active-site residue. Zn(2+) is bound by residues H331 and H337. 2 residues coordinate Ca(2+): C382 and N385. The propeptide occupies 388–403 (LRTDTVSTPVSGNELL). In terms of domain architecture, Disintegrin spans 395-476 (TPVSGNELLE…AGCPRNGFYG (82 aa)). 6 disulfide bridges follow: C409-C424, C411-C419, C418-C441, C432-C438, C437-C462, and C450-C469. Residues 454–456 (KGD) carry the Cell attachment site motif.

It belongs to the venom metalloproteinase (M12B) family. P-II subfamily. P-IId sub-subfamily. In terms of assembly, homodimer; disulfide-linked (disintegrin). Zn(2+) serves as cofactor. In terms of tissue distribution, expressed by the venom gland.

It localises to the secreted. With respect to regulation, the metalloproteinase is inhibited by EDTA, o-phenanthroline, and cysteine. Glutathione does not inhibit the enzymatic activity. Its function is as follows. Shows weak degradation of alpha-fibrinogen, but has no activity on beta- and gamma-chains. Digests luteinizing hormone-releasing hormone (LH-RH) and oxidized insulin at X-Leu, X-Phe, and X-Val bonds as well as X-His bond. Does not show fibrinogen-clotting activity. Does not show hemorrhagic activity. Functionally, inhibits ADP-induced platelet aggregation. This Gloydius brevicauda (Korean slamosa snake) protein is Zinc metalloproteinase/disintegrin.